The following is a 284-amino-acid chain: Diaminopimelate epimerase (284 aa).

Substrate is bound by residues Asn14 and Asn67. The active-site Proton donor is Cys76. Residues 77 to 78, Asn166, Asn199, and 217 to 218 each bind substrate; these read GN and ER. Cys226 serves as the catalytic Proton acceptor. Substrate is bound at residue 227–228; the sequence is GT.

This sequence belongs to the diaminopimelate epimerase family. Homodimer.

The protein resides in the cytoplasm. It carries out the reaction (2S,6S)-2,6-diaminopimelate = meso-2,6-diaminopimelate. The protein operates within amino-acid biosynthesis; L-lysine biosynthesis via DAP pathway; DL-2,6-diaminopimelate from LL-2,6-diaminopimelate: step 1/1. Its function is as follows. Catalyzes the stereoinversion of LL-2,6-diaminopimelate (L,L-DAP) to meso-diaminopimelate (meso-DAP), a precursor of L-lysine and an essential component of the bacterial peptidoglycan. The chain is Diaminopimelate epimerase from Bacillus velezensis (strain DSM 23117 / BGSC 10A6 / LMG 26770 / FZB42) (Bacillus amyloliquefaciens subsp. plantarum).